The chain runs to 391 residues: Nicotinate phosphoribosyltransferase (391 aa).

A Phosphohistidine; by autocatalysis modification is found at histidine 216.

It belongs to the NAPRTase family. In terms of processing, transiently phosphorylated on a His residue during the reaction cycle. Phosphorylation strongly increases the affinity for substrates and increases the rate of nicotinate D-ribonucleotide production. Dephosphorylation regenerates the low-affinity form of the enzyme, leading to product release.

It catalyses the reaction nicotinate + 5-phospho-alpha-D-ribose 1-diphosphate + ATP + H2O = nicotinate beta-D-ribonucleotide + ADP + phosphate + diphosphate. Its pathway is cofactor biosynthesis; NAD(+) biosynthesis; nicotinate D-ribonucleotide from nicotinate: step 1/1. Its function is as follows. Catalyzes the synthesis of beta-nicotinate D-ribonucleotide from nicotinate and 5-phospho-D-ribose 1-phosphate at the expense of ATP. The protein is Nicotinate phosphoribosyltransferase of Bordetella petrii (strain ATCC BAA-461 / DSM 12804 / CCUG 43448).